A 273-amino-acid chain; its full sequence is Formamidopyrimidine-DNA glycosylase (273 aa).

Pro-2 (schiff-base intermediate with DNA) is an active-site residue. Glu-3 serves as the catalytic Proton donor. Lys-57 acts as the Proton donor; for beta-elimination activity in catalysis. His-91, Arg-110, and Lys-151 together coordinate DNA. The FPG-type zinc-finger motif lies at 236–270 (QVYGRKGEACNDCGTIIEAKVIGQRNSYFCPHCQI). Arg-260 functions as the Proton donor; for delta-elimination activity in the catalytic mechanism.

The protein belongs to the FPG family. As to quaternary structure, monomer. Zn(2+) is required as a cofactor.

It carries out the reaction Hydrolysis of DNA containing ring-opened 7-methylguanine residues, releasing 2,6-diamino-4-hydroxy-5-(N-methyl)formamidopyrimidine.. The catalysed reaction is 2'-deoxyribonucleotide-(2'-deoxyribose 5'-phosphate)-2'-deoxyribonucleotide-DNA = a 3'-end 2'-deoxyribonucleotide-(2,3-dehydro-2,3-deoxyribose 5'-phosphate)-DNA + a 5'-end 5'-phospho-2'-deoxyribonucleoside-DNA + H(+). In terms of biological role, involved in base excision repair of DNA damaged by oxidation or by mutagenic agents. Acts as a DNA glycosylase that recognizes and removes damaged bases. Has a preference for oxidized purines, such as 7,8-dihydro-8-oxoguanine (8-oxoG). Has AP (apurinic/apyrimidinic) lyase activity and introduces nicks in the DNA strand. Cleaves the DNA backbone by beta-delta elimination to generate a single-strand break at the site of the removed base with both 3'- and 5'-phosphates. The polypeptide is Formamidopyrimidine-DNA glycosylase (Actinobacillus pleuropneumoniae serotype 7 (strain AP76)).